The primary structure comprises 87 residues: U3-theraphotoxin-Hhn1j (87 aa).

Residues 1-24 (MVNMKASMFLTFAGLVLLFVVCYA) form the signal peptide. Positions 25 to 52 (SESEEKEFPKEMLSSIFAVDNDFKQEER) are excised as a propeptide. 3 cysteine pairs are disulfide-bonded: C54/C67, C61/C72, and C66/C79.

Belongs to the neurotoxin 10 (Hwtx-1) family. 51 (Hntx-8) subfamily. Hntx-8 sub-subfamily. In terms of tissue distribution, expressed by the venom gland.

It is found in the secreted. Its function is as follows. Ion channel inhibitor. This Cyriopagopus hainanus (Chinese bird spider) protein is U3-theraphotoxin-Hhn1j.